A 252-amino-acid chain; its full sequence is Triosephosphate isomerase (252 aa).

10–12 (NWK) provides a ligand contact to substrate. H96 acts as the Electrophile in catalysis. Catalysis depends on E168, which acts as the Proton acceptor. Substrate is bound by residues G174, S214, and 235–236 (GG).

Belongs to the triosephosphate isomerase family. Homodimer.

It is found in the cytoplasm. It carries out the reaction D-glyceraldehyde 3-phosphate = dihydroxyacetone phosphate. Its pathway is carbohydrate biosynthesis; gluconeogenesis. The protein operates within carbohydrate degradation; glycolysis; D-glyceraldehyde 3-phosphate from glycerone phosphate: step 1/1. Its function is as follows. Involved in the gluconeogenesis. Catalyzes stereospecifically the conversion of dihydroxyacetone phosphate (DHAP) to D-glyceraldehyde-3-phosphate (G3P). The polypeptide is Triosephosphate isomerase (Streptococcus gordonii (strain Challis / ATCC 35105 / BCRC 15272 / CH1 / DL1 / V288)).